A 118-amino-acid chain; its full sequence is UPF0382 membrane protein C1782.12c (118 aa).

The N-terminal stretch at 1-18 (MTIWNVAALTGLLSVGLG) is a signal peptide. Residues 19–40 (AYGSHGLQKRVQDPHLLKSWST) are Lumenal-facing. Residues 41–61 (ACTYLMFHSLATMAVSLHPVY) traverse the membrane as a helical segment. Topologically, residues 62–67 (GKSRWT) are cytoplasmic. A helical membrane pass occupies residues 68-88 (GPLLITGSCLFSGTIYGLCLL). Residues 89 to 96 (PKGHSLRR) are Lumenal-facing. Residues 97–117 (ILGPLTPIGGLVMLTGWATML) form a helical membrane-spanning segment. Valine 118 is a topological domain (cytoplasmic).

This sequence belongs to the UPF0382 family.

It localises to the endoplasmic reticulum membrane. This is UPF0382 membrane protein C1782.12c from Schizosaccharomyces pombe (strain 972 / ATCC 24843) (Fission yeast).